The following is a 309-amino-acid chain: Tagatose-6-phosphate kinase (309 aa).

The protein belongs to the carbohydrate kinase PfkB family. LacC subfamily.

The enzyme catalyses D-tagatofuranose 6-phosphate + ATP = D-tagatofuranose 1,6-bisphosphate + ADP + H(+). The protein operates within carbohydrate metabolism; D-tagatose 6-phosphate degradation; D-glyceraldehyde 3-phosphate and glycerone phosphate from D-tagatose 6-phosphate: step 1/2. The sequence is that of Tagatose-6-phosphate kinase from Streptococcus pyogenes serotype M6 (strain ATCC BAA-946 / MGAS10394).